An 80-amino-acid polypeptide reads, in one-letter code: uncharacterized protein (80 aa).

The N-terminal stretch at Met1–Thr20 is a signal peptide. Residues Met1–Ala21 form a disordered region. A compositionally biased stretch (polar residues) spans Ser11 to Ala21.

This is an uncharacterized protein from Mycobacterium tuberculosis (strain CDC 1551 / Oshkosh).